A 133-amino-acid polypeptide reads, in one-letter code: Fatty acid-binding protein (133 aa).

It belongs to the calycin superfamily. Fatty-acid binding protein (FABP) family.

This Clonorchis sinensis (Chinese liver fluke) protein is Fatty acid-binding protein.